A 794-amino-acid polypeptide reads, in one-letter code: MKFKYGAIVFSGLLGVSAILAACGARGKFNQVDDGKIKLASSLTSRSASTALQKVVEKYNKVKGVNDYPIEITQIAGGYDGGRTDLQTRVNVKDTTNFYNLILNYPDLVSTLGRVGMELPFDKVKTDKLADRFLDFNNRISAISKKGIYGIPVSLSTEVLSINGPVLHYILNSAQGKVSSVTSVQRTADSGSGTTNNNGVTKPLKIDKENESTKKLWEEIENKAKENGKKTSSSRRKRNLSSSKQMSTQTQPTDNSNDANQSDQAIEKTWGKYQEVEGGLKDYTFKASVFENWHDLLDFSNRVAKSFSNINTNTNKKGTDIQGVLGIDSTPNSLFTSVFAAGGGNYDNFFYKVANGRADFSNFKNKGTSYQNLQKVYGDYKGLIDSNGLFVNKGGSYSSNFQKFHQLAYSISSTSGFFYSFAGENSKRLKFDGGNFIEFPGFTQAIYAPENNSQSGGESGDQTTNNEANLLGTFKIKSSNKSKSSSSKSSTKAETGKTSGGDQNQGKKGEGAQNQGKKGEGAQNQGKNGGVETTIYLYKNSIPSGKNKGENAILIDNKTIVEQLESAAKKEDKKSGESTTEQTQIQSKSVTEQKQPKIIGYTTTGNVHEDNKHIFPIDKLTSDRNFDRKIIVGATEETLDKSNTLQSNEAIVLPAPSKYKSTDTNKVTITQGPNIIGIHVNEKENAETQKFVDWFLNSPQTWEGKGKGKEQTNKTAAEFFAESASYILPLKEIFEQKNEKKEGSDQKDSKSNGRGKQTNLYTEKALELFRGISTDQIVSYSDQVTLGVVVSVME.

The first 22 residues, 1–22, serve as a signal peptide directing secretion; it reads MKFKYGAIVFSGLLGVSAILAA. Cys-23 is lipidated: N-palmitoyl cysteine. The S-diacylglycerol cysteine moiety is linked to residue Cys-23. Composition is skewed to polar residues over residues 182–200 and 245–261; these read TSVQ…NNGV and QMST…DANQ. Disordered stretches follow at residues 182-208, 222-261, 474-529, 566-594, and 737-757; these read TSVQ…KIDK, NKAK…DANQ, FKIK…GKNG, SAAK…TEQK, and KNEK…RGKQ. Positions 475–501 are enriched in low complexity; sequence KIKSSNKSKSSSSKSSTKAETGKTSGG. Residues 511-526 are compositionally biased toward polar residues; it reads GAQNQGKKGEGAQNQG. Residues 567–576 show a composition bias toward basic and acidic residues; that stretch reads AAKKEDKKSG. Residues 577-593 are compositionally biased toward polar residues; sequence ESTTEQTQIQSKSVTEQ. Basic and acidic residues predominate over residues 737–751; that stretch reads KNEKKEGSDQKDSKS.

Belongs to the MG185/MG260 family.

The protein resides in the cell membrane. This is an uncharacterized protein from Mycoplasma pneumoniae (strain ATCC 29342 / M129 / Subtype 1) (Mycoplasmoides pneumoniae).